The chain runs to 22 residues: IDAFQDTLYTHTLRTYLGRPWK.

The Proton donor role is filled by aspartate 6. The substrate site is built by arginine 19 and tryptophan 21.

This sequence belongs to the pectinesterase family.

The protein resides in the secreted. It is found in the cell wall. It catalyses the reaction [(1-&gt;4)-alpha-D-galacturonosyl methyl ester](n) + n H2O = [(1-&gt;4)-alpha-D-galacturonosyl](n) + n methanol + n H(+). The protein operates within glycan metabolism; pectin degradation; 2-dehydro-3-deoxy-D-gluconate from pectin: step 1/5. The protein is Pectinesterase of Capsicum chinense (Scotch bonnet).